The following is a 305-amino-acid chain: Homoserine O-acetyltransferase (305 aa).

The active-site Acyl-thioester intermediate is the C142. Residues K163 and S192 each coordinate substrate. The active-site Proton acceptor is the H235. The active site involves E237. Residue R249 coordinates substrate.

This sequence belongs to the MetA family.

Its subcellular location is the cytoplasm. It catalyses the reaction L-homoserine + acetyl-CoA = O-acetyl-L-homoserine + CoA. It participates in amino-acid biosynthesis; L-methionine biosynthesis via de novo pathway; O-acetyl-L-homoserine from L-homoserine: step 1/1. In terms of biological role, transfers an acetyl group from acetyl-CoA to L-homoserine, forming acetyl-L-homoserine. This Roseobacter denitrificans (strain ATCC 33942 / OCh 114) (Erythrobacter sp. (strain OCh 114)) protein is Homoserine O-acetyltransferase.